We begin with the raw amino-acid sequence, 2655 residues long: Probable polyketide synthase 42 (2655 aa).

The region spanning 16–445 (QNGVAVIGVG…GSNCCIILSE (430 aa)) is the Ketosynthase family 3 (KS3) domain. Residues Cys186, His325, and His368 each act as for beta-ketoacyl synthase activity in the active site. Residues 634 to 667 (GIKSDIMVGHSFGEIACSYCSGMVDFKTLCYLTY) form an acyl/malonyl transferase region. The active-site For acyl/malonyl transferase activity is Ser644. The segment at 926 to 1059 (HPTWKKANKN…ANYSLFKHND (134 aa)) is N-terminal hotdog fold. In terms of domain architecture, PKS/mFAS DH spans 926–1234 (HPTWKKANKN…CKSSIPIIDS (309 aa)). His970 functions as the Proton acceptor; for dehydratase activity in the catalytic mechanism. Residues 1074–1234 (NYTIISKDEL…CKSSIPIIDS (161 aa)) form a C-terminal hotdog fold region. Asp1146 functions as the Proton donor; for dehydratase activity in the catalytic mechanism. Residues 1700-1719 (YNNNNNNNNNNNNNNNNNNN) form a disordered region. In terms of domain architecture, Carrier spans 2517–2594 (NENNNIGDLL…TTIEIIIKGY (78 aa)). Ser2554 bears the O-(pantetheine 4'-phosphoryl)serine mark. The interval 2612–2655 (SVVQKETIKDNNENKDDIKIDMDDKKENLKGKKENIDDKKENNN) is disordered. Over residues 2617 to 2655 (ETIKDNNENKDDIKIDMDDKKENLKGKKENIDDKKENNN) the composition is skewed to basic and acidic residues. A coiled-coil region spans residues 2618-2655 (TIKDNNENKDDIKIDMDDKKENLKGKKENIDDKKENNN).

The cofactor is pantetheine 4'-phosphate.

Probable polyketide synthase. The protein is Probable polyketide synthase 42 (pks42) of Dictyostelium discoideum (Social amoeba).